A 175-amino-acid polypeptide reads, in one-letter code: Alkyl hydroperoxide reductase AhpD (175 aa).

C131 acts as the Proton donor in catalysis. A disulfide bond links C131 and C134. Residue C134 is the Cysteine sulfenic acid (-SOH) intermediate of the active site.

The protein belongs to the AhpD family.

It catalyses the reaction N(6)-[(R)-dihydrolipoyl]-L-lysyl-[lipoyl-carrier protein] + a hydroperoxide = N(6)-[(R)-lipoyl]-L-lysyl-[lipoyl-carrier protein] + an alcohol + H2O. Antioxidant protein with alkyl hydroperoxidase activity. Required for the reduction of the AhpC active site cysteine residues and for the regeneration of the AhpC enzyme activity. The protein is Alkyl hydroperoxide reductase AhpD of Brucella abortus (strain 2308).